The chain runs to 179 residues: Small ribosomal subunit protein uS5 (179 aa).

In terms of domain architecture, S5 DRBM spans Met-22–Val-85.

This sequence belongs to the universal ribosomal protein uS5 family. In terms of assembly, part of the 30S ribosomal subunit. Contacts proteins S4 and S8.

Its function is as follows. With S4 and S12 plays an important role in translational accuracy. Functionally, located at the back of the 30S subunit body where it stabilizes the conformation of the head with respect to the body. This Xylella fastidiosa (strain M23) protein is Small ribosomal subunit protein uS5.